The chain runs to 537 residues: Glucose-6-phosphate isomerase (537 aa).

Glu355 serves as the catalytic Proton donor. Active-site residues include His386 and Lys501.

Belongs to the GPI family.

The protein localises to the cytoplasm. The enzyme catalyses alpha-D-glucose 6-phosphate = beta-D-fructose 6-phosphate. The protein operates within carbohydrate biosynthesis; gluconeogenesis. Its pathway is carbohydrate degradation; glycolysis; D-glyceraldehyde 3-phosphate and glycerone phosphate from D-glucose: step 2/4. In terms of biological role, catalyzes the reversible isomerization of glucose-6-phosphate to fructose-6-phosphate. This chain is Glucose-6-phosphate isomerase, found in Protochlamydia amoebophila (strain UWE25).